The chain runs to 174 residues: Adenylate kinase (174 aa).

Residues 12-41 (STGDMLRAAIKAGTPLGLEAKKIIDEGGLV) are NMP. AMP contacts are provided by residues threonine 13, arginine 18, 39 to 41 (GLV), 67 to 70 (GFPR), and glutamine 74. The LID stretch occupies residues 104-141 (GRRVHLASGRTYHVTYNPPKVEGKDDVTGEDLIQRDDD). Residues arginine 105 and 114–115 (TY) contribute to the ATP site. Arginine 138 and arginine 149 together coordinate AMP.

The protein belongs to the adenylate kinase family. In terms of assembly, monomer.

The protein resides in the cytoplasm. The catalysed reaction is AMP + ATP = 2 ADP. It functions in the pathway purine metabolism; AMP biosynthesis via salvage pathway; AMP from ADP: step 1/1. Functionally, catalyzes the reversible transfer of the terminal phosphate group between ATP and AMP. Plays an important role in cellular energy homeostasis and in adenine nucleotide metabolism. The protein is Adenylate kinase of Neisseria cinerea.